Reading from the N-terminus, the 518-residue chain is Fusicoccin H C-9 hydroxylase (518 aa).

The chain crosses the membrane as a helical span at residues 12 to 29 (HLLLISTVIAVLAALIVS). Asparagine 81 and asparagine 168 each carry an N-linked (GlcNAc...) asparagine glycan. Residue cysteine 456 coordinates heme.

It belongs to the cytochrome P450 family. Requires heme as cofactor.

It localises to the membrane. Its pathway is mycotoxin biosynthesis. Its function is as follows. Cytochrome P450 monooxygenase; part of the 2 gene clusters that mediate the biosynthesis of fusicoccins, diterpene glucosides that display phytohormone-like activity and function as potent activators of plasma membrane H(+)-ATPases in plants by modifying 14-3-3 proteins and cause the plant disease constriction canker. The first step in the pathway is performed by the fusicoccadiene synthase PaFS that possesses both prenyl transferase and terpene cyclase activity, converting isopentenyl diphosphate and dimethylallyl diphosphate into geranylgeranyl diphosphate (GGDP) and successively converting GGDP into fusicocca-2,10(14)-diene, a precursor for fusicoccin H. The second step is the oxidation at the C-8 position by the cytochrome P450 monooxygenase PaP450-2 to yield fusicocca-2,10(14)-diene-8-beta-ol. The cytochrome P450 monooxygenase PaP450-1 then catalyzes the hydroxylation at the C-16 position to produce fusicocca-2,10(14)-diene-8-beta,16-diol. The dioxygenase fc-dox then catalyzes the 16-oxydation of fusicocca-2,10(14)-diene-8-beta,16-diol to yield an aldehyde (8-beta-hydroxyfusicocca-1,10(14)-dien-16-al). The short-chain dehydrogenase/reductase fc-sdr catalyzes the reduction of the aldehyde to yield fusicocca-1,10(14)-diene-8-beta,16-diol. The next step is the hydroxylation at C-9 performed by the cytochrome P450 monooxygenase PaP450-3 that leads to fusicoccin H aglycon which is glycosylated to fusicoccin H by the O-glycosyltransferase PaGT. Hydroxylation at C-12 by the cytochrome P450 monooxygenase PaP450-4 leads then to the production of fusicoccin Q and is followed by methylation by the O-methyltransferase PaMT to yield fusicoccin P. Fusicoccin P is further converted to fusicoccin J via prenylation by the O-glucose prenyltransferase PaPT. Cytochrome P450 monooxygenase PaP450-5 then performs hydroxylation at C-19 to yield dideacetyl-fusicoccin A which is acetylated to 3'-O-deacetyl-fusicoccin A by the O-acetyltransferase PaAT-2. Finally, a another acetylation by the O-acetyltransferase PaAT-1 yields fusicoccin A. This Phomopsis amygdali (Fusicoccum amygdali) protein is Fusicoccin H C-9 hydroxylase.